The primary structure comprises 172 residues: dCTP deaminase, dUMP-forming (172 aa).

Residues 93–98 (RSSVGR), aspartate 111, 119–121 (TLE), glutamine 138, and tyrosine 151 each bind dCTP. Residue glutamate 121 is the Proton donor/acceptor of the active site.

Belongs to the dCTP deaminase family. Homotrimer.

The enzyme catalyses dCTP + 2 H2O = dUMP + NH4(+) + diphosphate. The protein operates within pyrimidine metabolism; dUMP biosynthesis; dUMP from dCTP: step 1/1. Its function is as follows. Bifunctional enzyme that catalyzes both the deamination of dCTP to dUTP and the hydrolysis of dUTP to dUMP without releasing the toxic dUTP intermediate. The chain is dCTP deaminase, dUMP-forming from Hathewaya histolytica (Clostridium histolyticum).